A 291-amino-acid polypeptide reads, in one-letter code: ATP synthase gamma chain (291 aa).

Belongs to the ATPase gamma chain family. F-type ATPases have 2 components, CF(1) - the catalytic core - and CF(0) - the membrane proton channel. CF(1) has five subunits: alpha(3), beta(3), gamma(1), delta(1), epsilon(1). CF(0) has three main subunits: a, b and c.

It is found in the cell membrane. Functionally, produces ATP from ADP in the presence of a proton gradient across the membrane. The gamma chain is believed to be important in regulating ATPase activity and the flow of protons through the CF(0) complex. In Streptococcus pyogenes serotype M3 (strain ATCC BAA-595 / MGAS315), this protein is ATP synthase gamma chain.